A 651-amino-acid chain; its full sequence is 120 kDa Glycoprotein O (651 aa).

Positions methionine 1–leucine 56 are cleaved as a signal peptide. Residues asparagine 74, asparagine 97, asparagine 147, asparagine 208, asparagine 223, asparagine 234, and asparagine 254 are each glycosylated (N-linked (GlcNAc...) asparagine; by host). A compositionally biased stretch (low complexity) spans serine 275–proline 292. A disordered region spans residues serine 275–serine 303. N-linked (GlcNAc...) asparagine; by host glycosylation is found at asparagine 302, asparagine 355, asparagine 378, asparagine 395, asparagine 469, asparagine 502, asparagine 520, asparagine 546, asparagine 603, asparagine 620, and asparagine 631.

It belongs to the herpesviridae U47 family. In terms of assembly, part of a gH-gL-gO complex. Post-translationally, a shorter mature protein, gO-80K, is produced probably by proteolytic cleavage. In terms of processing, modified with high mannose-oligosaccharides. N-glycosylated with complex glycans.

It is found in the virion. Its subcellular location is the host cell membrane. The chain is 120 kDa Glycoprotein O (U47) from Human herpesvirus 6A (strain Uganda-1102) (HHV-6 variant A).